A 350-amino-acid chain; its full sequence is Hydroxymethylglutaryl-CoA synthase (350 aa).

Glu-83 (proton donor/acceptor) is an active-site residue. Residue Cys-115 is the Acyl-thioester intermediate of the active site. The (3S)-3-hydroxy-3-methylglutaryl-CoA site is built by Cys-115 and Thr-156. CoA is bound at residue Arg-204. The (3S)-3-hydroxy-3-methylglutaryl-CoA site is built by Thr-206 and His-239. The Proton donor/acceptor role is filled by His-239. Lys-244 contacts CoA. (3S)-3-hydroxy-3-methylglutaryl-CoA contacts are provided by Asn-271 and Ser-301.

This sequence belongs to the thiolase-like superfamily. Archaeal HMG-CoA synthase family. As to quaternary structure, interacts with acetoacetyl-CoA thiolase that catalyzes the precedent step in the pathway and with a DUF35 protein. The acetoacetyl-CoA thiolase/HMG-CoA synthase complex channels the intermediate via a fused CoA-binding site, which allows for efficient coupling of the endergonic thiolase reaction with the exergonic HMGCS reaction.

The enzyme catalyses acetoacetyl-CoA + acetyl-CoA + H2O = (3S)-3-hydroxy-3-methylglutaryl-CoA + CoA + H(+). Its pathway is metabolic intermediate biosynthesis; (R)-mevalonate biosynthesis; (R)-mevalonate from acetyl-CoA: step 2/3. In terms of biological role, catalyzes the condensation of acetyl-CoA with acetoacetyl-CoA to form 3-hydroxy-3-methylglutaryl-CoA (HMG-CoA). Functions in the mevalonate (MVA) pathway leading to isopentenyl diphosphate (IPP), a key precursor for the biosynthesis of isoprenoid compounds that are building blocks of archaeal membrane lipids. The sequence is that of Hydroxymethylglutaryl-CoA synthase from Thermococcus sibiricus (strain DSM 12597 / MM 739).